The chain runs to 103 residues: Enhancer of rudimentary homolog (103 aa).

This sequence belongs to the E(R) family. Homodimer.

May have a role in the cell cycle. The chain is Enhancer of rudimentary homolog from Aedes aegypti (Yellowfever mosquito).